Consider the following 112-residue polypeptide: Large ribosomal subunit protein uL22 (112 aa).

It belongs to the universal ribosomal protein uL22 family. In terms of assembly, part of the 50S ribosomal subunit.

This protein binds specifically to 23S rRNA; its binding is stimulated by other ribosomal proteins, e.g. L4, L17, and L20. It is important during the early stages of 50S assembly. It makes multiple contacts with different domains of the 23S rRNA in the assembled 50S subunit and ribosome. Functionally, the globular domain of the protein is located near the polypeptide exit tunnel on the outside of the subunit, while an extended beta-hairpin is found that lines the wall of the exit tunnel in the center of the 70S ribosome. The chain is Large ribosomal subunit protein uL22 from Nitratidesulfovibrio vulgaris (strain ATCC 29579 / DSM 644 / CCUG 34227 / NCIMB 8303 / VKM B-1760 / Hildenborough) (Desulfovibrio vulgaris).